The following is a 492-amino-acid chain: Ketol-acid reductoisomerase (NADP(+)) (492 aa).

The KARI N-terminal Rossmann domain maps to 15 to 208 (AQLGKCRFMA…GGHRAGVLES (194 aa)). NADP(+)-binding positions include 45 to 48 (CGAQ), Arg68, Arg76, Ser78, and 108 to 110 (DKQ). His132 is an active-site residue. NADP(+) is bound at residue Gly158. KARI C-terminal knotted domains are found at residues 209–344 (SFVA…NAPQ) and 345–485 (FEGK…MTDM). Residues Asp217, Glu221, Glu389, and Glu393 each coordinate Mg(2+). Residue Ser414 participates in substrate binding.

This sequence belongs to the ketol-acid reductoisomerase family. Requires Mg(2+) as cofactor.

It carries out the reaction (2R)-2,3-dihydroxy-3-methylbutanoate + NADP(+) = (2S)-2-acetolactate + NADPH + H(+). It catalyses the reaction (2R,3R)-2,3-dihydroxy-3-methylpentanoate + NADP(+) = (S)-2-ethyl-2-hydroxy-3-oxobutanoate + NADPH + H(+). Its pathway is amino-acid biosynthesis; L-isoleucine biosynthesis; L-isoleucine from 2-oxobutanoate: step 2/4. It participates in amino-acid biosynthesis; L-valine biosynthesis; L-valine from pyruvate: step 2/4. Involved in the biosynthesis of branched-chain amino acids (BCAA). Catalyzes an alkyl-migration followed by a ketol-acid reduction of (S)-2-acetolactate (S2AL) to yield (R)-2,3-dihydroxy-isovalerate. In the isomerase reaction, S2AL is rearranged via a Mg-dependent methyl migration to produce 3-hydroxy-3-methyl-2-ketobutyrate (HMKB). In the reductase reaction, this 2-ketoacid undergoes a metal-dependent reduction by NADPH to yield (R)-2,3-dihydroxy-isovalerate. The chain is Ketol-acid reductoisomerase (NADP(+)) from Yersinia enterocolitica serotype O:8 / biotype 1B (strain NCTC 13174 / 8081).